The chain runs to 255 residues: Venom allergen-1 (255 aa).

A signal peptide spans 1–21; sequence MASHVIVKFITAAILIGSCYA. An SCP domain is found at 65 to 210; sequence LKKHNELRAE…VIKYYLVCNY (146 aa). N-linked (GlcNAc...) asparagine glycans are attached at residues Asn146 and Asn209.

Belongs to the CRISP family. In terms of assembly, interacts with human LRPPRC; the interaction interrupts association between BECN1 and LRPPRC. Interacts with human CD4. As to quaternary structure, (Microbial infection) Interacts with Zika virus envelope protein E and Zika virus-like particles; the interaction does not affect Zika virus replication in human endothelial cells and keratinocytes. Saliva (at protein level). Female salivary gland. No or low-level expression in female hemolymph, midgut, Malpighian tubule system and ovary. No or low-level expression in male tissues.

It localises to the secreted. Its subcellular location is the host endosome. The protein localises to the host mitochondrion. Activates autophagy in human monocytic cells, dendritic cells and macrophages. Promotes activation of human CD4(+) T-cells. Does not affect cytokine expression in human monocytic cells. Its function is as follows. (Microbial infection) Promotes dengue virus type 2 replication in human monocytic cells, dendritic cells and macrophages. Pro-viral properties are linked to BECN1-mediated autophagy activation in the host. Does not directly interact with the purified envelope protein of dengue virus type 2. Functionally, (Microbial infection) Promotes Zika virus replication in human monocytic cells, dendritic cells and macrophages. Facilitates Zika virus transmission from infected mosquitoes to the host in mouse model. Pro-viral properties are linked to BECN1-mediated autophagy activation in the host. Does not affect Zika virus replication in human endothelial cells and keratinocytes. In terms of biological role, (Microbial infection) Promotes Semliki Forest virus replication in human monocytic cells. (Microbial infection) Does not influence Batai virus replication in human monocytic cells. This chain is Venom allergen-1, found in Aedes aegypti (Yellowfever mosquito).